Consider the following 480-residue polypeptide: tRNA-2-methylthio-N(6)-dimethylallyladenosine synthase (480 aa).

The MTTase N-terminal domain maps to 3-120 (KKLYIKTWGC…LPEMLNQLQH (118 aa)). The [4Fe-4S] cluster site is built by cysteine 12, cysteine 49, cysteine 83, cysteine 157, cysteine 161, and cysteine 164. Residues 143–375 (KADGASAFVS…QEQITHQALR (233 aa)) form the Radical SAM core domain. Residues 378–441 (RQMLNTEQRV…ANSLRGELVR (64 aa)) form the TRAM domain.

Belongs to the methylthiotransferase family. MiaB subfamily. In terms of assembly, monomer. [4Fe-4S] cluster serves as cofactor.

The protein localises to the cytoplasm. It carries out the reaction N(6)-dimethylallyladenosine(37) in tRNA + (sulfur carrier)-SH + AH2 + 2 S-adenosyl-L-methionine = 2-methylsulfanyl-N(6)-dimethylallyladenosine(37) in tRNA + (sulfur carrier)-H + 5'-deoxyadenosine + L-methionine + A + S-adenosyl-L-homocysteine + 2 H(+). Its function is as follows. Catalyzes the methylthiolation of N6-(dimethylallyl)adenosine (i(6)A), leading to the formation of 2-methylthio-N6-(dimethylallyl)adenosine (ms(2)i(6)A) at position 37 in tRNAs that read codons beginning with uridine. This is tRNA-2-methylthio-N(6)-dimethylallyladenosine synthase from Colwellia psychrerythraea (strain 34H / ATCC BAA-681) (Vibrio psychroerythus).